Consider the following 501-residue polypeptide: CUGBP Elav-like family member 1 (501 aa).

Positions 2–196 (NGSLDHPDQP…DTQKDKEQKR (195 aa)) are binds strongly to URE. 2 RRM domains span residues 16-99 (IKMF…PADS) and 108-188 (RKLF…FADT). Low complexity-rich tracts occupy residues 274–298 (PTGS…TPSG) and 312–323 (SSPTSSTSSSVN). The tract at residues 274–323 (PTGSSALTTSSSPLSVLTSSGTPSGQPAQSAWDAYKAGSSPTSSTSSSVN) is disordered. Residues 397–501 (LLSQQNVSAA…KRSKNDSKPY (105 aa)) form a binds strongly to URE region. Positions 416–494 (ANLFIYHLPQ…KRLKVQLKRS (79 aa)) constitute an RRM 3 domain.

It belongs to the CELF/BRUNOL family.

The protein resides in the nucleus. It localises to the cytoplasm. Its function is as follows. RNA-binding protein implicated in the regulation of several post-transcriptional events. May be involved in mRNA translation activation and stability. Involved in the regulation of muscle-specific splicing of alpha actinin pre-mRNAs via the binding to the UR-repeat element (URE) at the branch point of the non-muscle (NM) exon. This is CUGBP Elav-like family member 1 (celf1) from Danio rerio (Zebrafish).